The sequence spans 113 residues: Putative membrane protein insertion efficiency factor (113 aa).

This sequence belongs to the UPF0161 family.

It localises to the cell inner membrane. Functionally, could be involved in insertion of integral membrane proteins into the membrane. In Campylobacter jejuni subsp. doylei (strain ATCC BAA-1458 / RM4099 / 269.97), this protein is Putative membrane protein insertion efficiency factor.